The following is a 140-amino-acid chain: ATP synthase epsilon chain (140 aa).

Belongs to the ATPase epsilon chain family. F-type ATPases have 2 components, CF(1) - the catalytic core - and CF(0) - the membrane proton channel. CF(1) has five subunits: alpha(3), beta(3), gamma(1), delta(1), epsilon(1). CF(0) has three main subunits: a, b and c.

It is found in the cell inner membrane. Functionally, produces ATP from ADP in the presence of a proton gradient across the membrane. The protein is ATP synthase epsilon chain of Legionella pneumophila (strain Lens).